The chain runs to 216 residues: Ribosomal RNA large subunit methyltransferase E (216 aa).

S-adenosyl-L-methionine-binding residues include Gly-67, Trp-69, Asp-87, Asp-103, and Asp-128. The Proton acceptor role is filled by Lys-168.

The protein belongs to the class I-like SAM-binding methyltransferase superfamily. RNA methyltransferase RlmE family.

The protein resides in the cytoplasm. The catalysed reaction is uridine(2552) in 23S rRNA + S-adenosyl-L-methionine = 2'-O-methyluridine(2552) in 23S rRNA + S-adenosyl-L-homocysteine + H(+). Specifically methylates the uridine in position 2552 of 23S rRNA at the 2'-O position of the ribose in the fully assembled 50S ribosomal subunit. The sequence is that of Ribosomal RNA large subunit methyltransferase E from Acinetobacter baylyi (strain ATCC 33305 / BD413 / ADP1).